Here is a 153-residue protein sequence, read N- to C-terminus: Probable succinate transporter subunit YjjB (153 aa).

Helical transmembrane passes span 7 to 27 (WALL…AMVF), 51 to 71 (MIHF…MIGI), 83 to 103 (VFTV…TAMI), and 125 to 145 (FLKA…PGLW).

Belongs to the ThrE exporter (TC 2.A.79) family. As to quaternary structure, the transporter is composed of YjjB and YjjP.

It is found in the cell inner membrane. In terms of biological role, involved in succinate export with YjjP. Both proteins are required for export. The chain is Probable succinate transporter subunit YjjB from Yersinia pestis bv. Antiqua (strain Antiqua).